Consider the following 145-residue polypeptide: Large ribosomal subunit protein uL13 (145 aa).

The protein belongs to the universal ribosomal protein uL13 family. In terms of assembly, part of the 50S ribosomal subunit.

Functionally, this protein is one of the early assembly proteins of the 50S ribosomal subunit, although it is not seen to bind rRNA by itself. It is important during the early stages of 50S assembly. The chain is Large ribosomal subunit protein uL13 from Exiguobacterium sibiricum (strain DSM 17290 / CCUG 55495 / CIP 109462 / JCM 13490 / 255-15).